Reading from the N-terminus, the 75-residue chain is Small ribosomal subunit protein bS18 (75 aa).

The protein belongs to the bacterial ribosomal protein bS18 family. In terms of assembly, part of the 30S ribosomal subunit. Forms a tight heterodimer with protein bS6.

Its function is as follows. Binds as a heterodimer with protein bS6 to the central domain of the 16S rRNA, where it helps stabilize the platform of the 30S subunit. This chain is Small ribosomal subunit protein bS18, found in Glaesserella parasuis serovar 5 (strain SH0165) (Haemophilus parasuis).